The primary structure comprises 656 residues: Methionine--tRNA ligase (656 aa).

Positions 11–21 (YYVNDIPHIGH) match the 'HIGH' region motif. Zn(2+) is bound by residues Cys-126, Cys-129, Cys-147, and Cys-150. The 'KMSKS' region motif lies at 301-305 (KMSKS). Residue Lys-304 participates in ATP binding. The tRNA-binding domain occupies 555 to 656 (DFKKVEIKVG…REKIAGSLIS (102 aa)).

The protein belongs to the class-I aminoacyl-tRNA synthetase family. MetG type 2A subfamily. As to quaternary structure, homodimer. Zn(2+) is required as a cofactor.

Its subcellular location is the cytoplasm. The enzyme catalyses tRNA(Met) + L-methionine + ATP = L-methionyl-tRNA(Met) + AMP + diphosphate. Functionally, is required not only for elongation of protein synthesis but also for the initiation of all mRNA translation through initiator tRNA(fMet) aminoacylation. The sequence is that of Methionine--tRNA ligase (metG) from Helicobacter pylori (strain J99 / ATCC 700824) (Campylobacter pylori J99).